The primary structure comprises 274 residues: MGILDFFRKKEKKENLWTKCEECKNILLAQELETNFYVCPKCGHHHQMNPYLWASMLLDYNYNVLFEYILPTDFLSFKDTKRYKDRLKTLKETSNTSEAMTVFDGKLSDYPVVLSVMDFSFIGGSMGSVVGERFKLASLKAVQDKKPHISVVTSGGARMQESVISLMQMAKTSIAVDIMHKNGIPFITVLTNPTTGGVSASFAFLGDVIIAEPKAIIGFAGARVIEQTIKQQLPEDFQTSEFLLKKGMVDMVVHRHLMKQTLKNLLNLLFYKNA.

The CoA carboxyltransferase N-terminal domain maps to 16 to 274; that stretch reads LWTKCEECKN…LLNLLFYKNA (259 aa). The Zn(2+) site is built by Cys20, Cys23, Cys39, and Cys42. The C4-type zinc-finger motif lies at 20 to 42; sequence CEECKNILLAQELETNFYVCPKC.

It belongs to the AccD/PCCB family. Acetyl-CoA carboxylase is a heterohexamer composed of biotin carboxyl carrier protein (AccB), biotin carboxylase (AccC) and two subunits each of ACCase subunit alpha (AccA) and ACCase subunit beta (AccD). The cofactor is Zn(2+).

It localises to the cytoplasm. It carries out the reaction N(6)-carboxybiotinyl-L-lysyl-[protein] + acetyl-CoA = N(6)-biotinyl-L-lysyl-[protein] + malonyl-CoA. It participates in lipid metabolism; malonyl-CoA biosynthesis; malonyl-CoA from acetyl-CoA: step 1/1. In terms of biological role, component of the acetyl coenzyme A carboxylase (ACC) complex. Biotin carboxylase (BC) catalyzes the carboxylation of biotin on its carrier protein (BCCP) and then the CO(2) group is transferred by the transcarboxylase to acetyl-CoA to form malonyl-CoA. In Hydrogenobaculum sp. (strain Y04AAS1), this protein is Acetyl-coenzyme A carboxylase carboxyl transferase subunit beta.